Here is a 555-residue protein sequence, read N- to C-terminus: Glucose-6-phosphate isomerase (555 aa).

Glu-365 (proton donor) is an active-site residue. Catalysis depends on residues His-396 and Lys-522.

It belongs to the GPI family.

It is found in the cytoplasm. The catalysed reaction is alpha-D-glucose 6-phosphate = beta-D-fructose 6-phosphate. The protein operates within carbohydrate biosynthesis; gluconeogenesis. It participates in carbohydrate degradation; glycolysis; D-glyceraldehyde 3-phosphate and glycerone phosphate from D-glucose: step 2/4. In terms of biological role, catalyzes the reversible isomerization of glucose-6-phosphate to fructose-6-phosphate. The protein is Glucose-6-phosphate isomerase of Psychrobacter cryohalolentis (strain ATCC BAA-1226 / DSM 17306 / VKM B-2378 / K5).